A 79-amino-acid polypeptide reads, in one-letter code: Large ribosomal subunit protein uL24 (79 aa).

This sequence belongs to the universal ribosomal protein uL24 family. In terms of assembly, part of the 50S ribosomal subunit.

In terms of biological role, one of two assembly initiator proteins, it binds directly to the 5'-end of the 23S rRNA, where it nucleates assembly of the 50S subunit. Functionally, one of the proteins that surrounds the polypeptide exit tunnel on the outside of the subunit. The sequence is that of Large ribosomal subunit protein uL24 from Lactobacillus delbrueckii subsp. bulgaricus (strain ATCC 11842 / DSM 20081 / BCRC 10696 / JCM 1002 / NBRC 13953 / NCIMB 11778 / NCTC 12712 / WDCM 00102 / Lb 14).